The primary structure comprises 308 residues: uncharacterized protein (308 aa).

This is an uncharacterized protein from Methanocaldococcus jannaschii (strain ATCC 43067 / DSM 2661 / JAL-1 / JCM 10045 / NBRC 100440) (Methanococcus jannaschii).